A 695-amino-acid polypeptide reads, in one-letter code: Elongation factor G (695 aa).

A tr-type G domain is found at 10–285 (DKTRNIGIMA…GVVDYLPSPL (276 aa)). GTP contacts are provided by residues 19 to 26 (AHIDAGKT), 83 to 87 (DTPGH), and 137 to 140 (NKMD).

The protein belongs to the TRAFAC class translation factor GTPase superfamily. Classic translation factor GTPase family. EF-G/EF-2 subfamily.

It is found in the cytoplasm. Functionally, catalyzes the GTP-dependent ribosomal translocation step during translation elongation. During this step, the ribosome changes from the pre-translocational (PRE) to the post-translocational (POST) state as the newly formed A-site-bound peptidyl-tRNA and P-site-bound deacylated tRNA move to the P and E sites, respectively. Catalyzes the coordinated movement of the two tRNA molecules, the mRNA and conformational changes in the ribosome. The polypeptide is Elongation factor G (Latilactobacillus sakei subsp. sakei (strain 23K) (Lactobacillus sakei subsp. sakei)).